A 501-amino-acid chain; its full sequence is U6 snRNA (guanine-N(2))-methyltransferase THUMPD2 (501 aa).

A THUMP domain is found at 149-264 (TEQIQELQET…DVYSVLGIPV (116 aa)). The interval 414 to 469 (LKGGEASSGPLNSQGGHTEEPGGEERLTPAEKAAVSEPVSSPFAASNQGRLDRMPP) is disordered. Basic and acidic residues predominate over residues 430-442 (HTEEPGGEERLTP).

It belongs to the methyltransferase superfamily. In terms of assembly, part of the heterodimeric THUMPD2-TRM112 methyltransferase complex; this complex forms an active tRNA methyltransferase, where TRMT112 acts as an activator of the catalytic subunit THUMPD2.

The protein resides in the nucleus. The enzyme catalyses guanosine in U6 snRNA + S-adenosyl-L-methionine = N(2)-methylguanosine in U6 snRNA + S-adenosyl-L-homocysteine + H(+). Functionally, catalytic subunit of the THUMPD2-TRM112 methyltransferase complex, that specifically mediates the S-adenosyl-L-methionine-dependent N(2)-methylation of guanosine nucleotides, most probably at position 72 (m2G72), in the U6snRNA of the major spliceosome. This modification in the U6 snRNA affects the constitutive splicing efficiency of introns that have suboptimal splice sites and can impact final mRNA levels. The polypeptide is U6 snRNA (guanine-N(2))-methyltransferase THUMPD2 (Bos taurus (Bovine)).